A 766-amino-acid chain; its full sequence is Flocculation suppression protein (766 aa).

5 disordered regions span residues 1-52 (MSEE…HGSK), 129-181 (HDHS…PTKI), 203-247 (KRRA…SSNS), 547-619 (KPVP…SISG), and 657-766 (SVTP…KVKM). 2 stretches are compositionally biased toward low complexity: residues 8–19 (SAPAPASTPAPA) and 134–147 (NDAN…TNDD). The DNA-binding element occupies 64 to 186 (IFIHKLYQIL…NPTKIWEFKH (123 aa)). A compositionally biased stretch (basic and acidic residues) spans 171–181 (QEKEKSNPTKI). Over residues 208 to 224 (SRNNSSINSRKNSSNQN) the composition is skewed to low complexity. The residue at position 220 (Ser220) is a Phosphoserine. Residues 236-247 (SSIQDPSTSSNS) show a composition bias toward polar residues. At Ser556 the chain carries Phosphoserine. Polar residues predominate over residues 679 to 699 (AVSSNLINSPMNVEHSSSLSQ). Residues 708 to 719 (LPQPSLPTTSTT) are compositionally biased toward low complexity. The residue at position 733 (Ser733) is a Phosphoserine. Residues 738-750 (LLNQEDSSTSSAD) show a composition bias toward polar residues.

In the N-terminal section; belongs to the HSF family.

The protein resides in the nucleus. Functionally, involved in cell surface assembly and regulation of the gene related to flocculation (asexual cell aggregation). Mutations in SFL1 causes constitutive cell aggregation. This chain is Flocculation suppression protein (SFL1), found in Saccharomyces cerevisiae (strain ATCC 204508 / S288c) (Baker's yeast).